A 465-amino-acid chain; its full sequence is Probable Xaa-Pro aminopeptidase pepP (465 aa).

4 residues coordinate Mn(2+): Asp-261, Asp-272, Glu-395, and Glu-435.

It belongs to the peptidase M24B family. Mn(2+) is required as a cofactor.

It carries out the reaction Release of any N-terminal amino acid, including proline, that is linked to proline, even from a dipeptide or tripeptide.. Functionally, catalyzes the removal of a penultimate prolyl residue from the N-termini of peptides. The protein is Probable Xaa-Pro aminopeptidase pepP (pepP) of Talaromyces marneffei (strain ATCC 18224 / CBS 334.59 / QM 7333) (Penicillium marneffei).